Consider the following 1324-residue polypeptide: Structural maintenance of chromosomes protein 4 (1324 aa).

Residues 1 to 24 (MSDKGIFRTSSTPSIVDVTPDRGE) form a disordered region. At T19 the chain carries Phosphothreonine; by CDC2. 155–162 (GPNGSGKS) is a binding site for ATP. 2 coiled-coil regions span residues 310–337 (QELSNSDDICAEKESRLKLVLSEKAKLE) and 370–628 (NKKT…KASL). In terms of domain architecture, SMC hinge spans 651–764 (NGFFGRLGDL…KNLEQANRIA (114 aa)). Coiled-coil stretches lie at residues 825-1077 (YRQH…MSNL) and 1297-1324 (LSSRLVGIYKTANMTKSVTINNKEILTD).

The protein belongs to the SMC family. SMC4 subfamily. As to quaternary structure, forms a heterodimer with cut14/smc2. Component of the condensin complex, which contains the smc2 and smc4 heterodimer, and three non smc subunits that probably regulate the complex: cnd1, cnd2 and cnd3. Interacts with C1739.07. In terms of processing, phosphorylated by CDC2 on Thr-19 at metaphase.

It is found in the nucleus. The protein resides in the cytoplasm. The protein localises to the chromosome. Central component of the condensin complex, a complex required for conversion of interphase chromatin into mitotic-like condense chromosomes. The condensin complex probably introduces positive supercoils into relaxed DNA in the presence of type I topoisomerases and converts nicked DNA into positive knotted forms in the presence of type II topoisomerases. This is Structural maintenance of chromosomes protein 4 (cut3) from Schizosaccharomyces pombe (strain 972 / ATCC 24843) (Fission yeast).